A 213-amino-acid polypeptide reads, in one-letter code: uncharacterized protein (213 aa).

Residues Gly53, Glu74, and Asp96 each contribute to the S-adenosyl-L-methionine site.

It belongs to the methyltransferase superfamily. YrrT family.

In terms of biological role, could be a S-adenosyl-L-methionine-dependent methyltransferase. This is an uncharacterized protein from Bacillus pumilus (strain SAFR-032).